We begin with the raw amino-acid sequence, 298 residues long: Cyanophycinase (298 aa).

Active-site charge relay system residues include Ser155, Glu173, and His197.

Belongs to the peptidase S51 family.

It carries out the reaction [L-4-(L-arginin-2-N-yl)aspartate](n) + H2O = [L-4-(L-arginin-2-N-yl)aspartate](n-1) + L-4-(L-arginin-2-N-yl)aspartate. In terms of biological role, exopeptidase that catalyzes the hydrolytic cleavage of multi-L-arginyl-poly-L-aspartic acid (cyanophycin; a water-insoluble reserve polymer) into aspartate-arginine dipeptides. In Trichormus variabilis (strain ATCC 29413 / PCC 7937) (Anabaena variabilis), this protein is Cyanophycinase (cphB).